A 687-amino-acid polypeptide reads, in one-letter code: Glycine--tRNA ligase beta subunit (687 aa).

Belongs to the class-II aminoacyl-tRNA synthetase family. As to quaternary structure, tetramer of two alpha and two beta subunits.

The protein localises to the cytoplasm. The enzyme catalyses tRNA(Gly) + glycine + ATP = glycyl-tRNA(Gly) + AMP + diphosphate. This Citrifermentans bemidjiense (strain ATCC BAA-1014 / DSM 16622 / JCM 12645 / Bem) (Geobacter bemidjiensis) protein is Glycine--tRNA ligase beta subunit.